The following is a 406-amino-acid chain: Probable endo-xylogalacturonan hydrolase A (406 aa).

Residues 1–18 form the signal peptide; that stretch reads MISLNSIFLLSLVGLSRA. Residues 20–49 form a disordered region; the sequence is PSRSETSPDRTIKPRAACTPTAGGSSSTDD. PbH1 repeat units follow at residues 183-213, 214-235, 237-257, 266-289, 299-320, and 368-390; these read TSNA…DIGA, STYV…AFKP, ANYV…SVGS, VQNV…KTYP, VKNA…QIQS, and TCDV…ILCG. Asp228 acts as the Proton donor in catalysis. Residue Asn244 is glycosylated (N-linked (GlcNAc...) asparagine). Residue His251 is part of the active site. 3 N-linked (GlcNAc...) asparagine glycosylation sites follow: Asn273, Asn278, and Asn301.

It belongs to the glycosyl hydrolase 28 family.

It localises to the secreted. Functionally, pectinolytic enzyme involved in the degradation of xylogalacturonan (xga), a galacturonan backbone heavily substituted with xylose, and which is one important component of the hairy regions of pectin. Activity requires a galacturonic acid backbone substituted with xylose. In Aspergillus oryzae (strain ATCC 42149 / RIB 40) (Yellow koji mold), this protein is Probable endo-xylogalacturonan hydrolase A (xghA).